The chain runs to 313 residues: tRNA dimethylallyltransferase (313 aa).

Position 11–18 (11–18) interacts with ATP; it reads GPTAAGKS. 13–18 is a binding site for substrate; that stretch reads TAAGKS. Interaction with substrate tRNA stretches follow at residues 36-39, 160-164, and 244-249; these read DSAT, QRIQR, and RCVGYR.

The protein belongs to the IPP transferase family. As to quaternary structure, monomer. Mg(2+) serves as cofactor.

It catalyses the reaction adenosine(37) in tRNA + dimethylallyl diphosphate = N(6)-dimethylallyladenosine(37) in tRNA + diphosphate. Catalyzes the transfer of a dimethylallyl group onto the adenine at position 37 in tRNAs that read codons beginning with uridine, leading to the formation of N6-(dimethylallyl)adenosine (i(6)A). The protein is tRNA dimethylallyltransferase of Bordetella parapertussis (strain 12822 / ATCC BAA-587 / NCTC 13253).